The primary structure comprises 383 residues: MLASYASDPLKSRGRLYKEIPTYYRNEFERDRDRIIHTNAFRRLQYKTQVFINHEGDHYRNRLTHSLEVSTVARSVANTLNLSSDLAETIALAHDLGHTPFGHAGERALNECMKEYHGFSHNSQSLKILTLLEKRYAAYNGVNLTWEVLEGIVKHNGPILGAINEYVAEYNKQNDLELSTYASAEAQVASLADDISYISHDLEDSIGAKIIDFDSLAELQYIDNYVFELKAKFKDISPSCLIYEVVRKLIHELITDLLWQTKENLNKEKITNIDEIRNLHYPIVDFTEKTNERINEIKKFLHKRVYESNKMIAISIKCTKIVQGLFKIYMDDINLLPTNWKILIDSNKTYSKARVIADYIAGMTDRFAIQEYNQLCSPNFNNI.

The region spanning 62–198 (RLTHSLEVST…ASLADDISYI (137 aa)) is the HD domain.

This sequence belongs to the dGTPase family. Type 2 subfamily.

This Rickettsia prowazekii (strain Madrid E) protein is Deoxyguanosinetriphosphate triphosphohydrolase-like protein.